A 336-amino-acid chain; its full sequence is Tryptophan--tRNA ligase (336 aa).

ATP contacts are provided by residues 15 to 17 and 24 to 25; these read QPT and GN. The 'HIGH' region signature appears at 16-25; the sequence is PTSDSLHLGN. An L-tryptophan-binding site is contributed by aspartate 141. Residues 153–155, isoleucine 192, and 201–205 contribute to the ATP site; these read GED and KMSKS. A 'KMSKS' region motif is present at residues 201-205; that stretch reads KMSKS.

This sequence belongs to the class-I aminoacyl-tRNA synthetase family. As to quaternary structure, homodimer.

It is found in the cytoplasm. It catalyses the reaction tRNA(Trp) + L-tryptophan + ATP = L-tryptophyl-tRNA(Trp) + AMP + diphosphate + H(+). Its function is as follows. Catalyzes the attachment of tryptophan to tRNA(Trp). The sequence is that of Tryptophan--tRNA ligase from Mycobacterium tuberculosis (strain CDC 1551 / Oshkosh).